The primary structure comprises 241 residues: Adapter protein MecA (241 aa).

Positions T115–N141 are disordered.

This sequence belongs to the MecA family. In terms of assembly, homodimer.

Functionally, enables the recognition and targeting of unfolded and aggregated proteins to the ClpC protease or to other proteins involved in proteolysis. In Pediococcus pentosaceus (strain ATCC 25745 / CCUG 21536 / LMG 10740 / 183-1w), this protein is Adapter protein MecA.